Consider the following 260-residue polypeptide: Hydroxyethylthiazole kinase (260 aa).

Met-36 serves as a coordination point for substrate. Residues Arg-112 and Thr-157 each contribute to the ATP site. Gly-184 contributes to the substrate binding site.

It belongs to the Thz kinase family. Requires Mg(2+) as cofactor.

It catalyses the reaction 5-(2-hydroxyethyl)-4-methylthiazole + ATP = 4-methyl-5-(2-phosphooxyethyl)-thiazole + ADP + H(+). The protein operates within cofactor biosynthesis; thiamine diphosphate biosynthesis; 4-methyl-5-(2-phosphoethyl)-thiazole from 5-(2-hydroxyethyl)-4-methylthiazole: step 1/1. Its function is as follows. Catalyzes the phosphorylation of the hydroxyl group of 4-methyl-5-beta-hydroxyethylthiazole (THZ). The protein is Hydroxyethylthiazole kinase of Shouchella clausii (strain KSM-K16) (Alkalihalobacillus clausii).